The chain runs to 316 residues: Methionyl-tRNA formyltransferase (316 aa).

112 to 115 (SLLP) is a binding site for (6S)-5,6,7,8-tetrahydrofolate.

It belongs to the Fmt family.

The catalysed reaction is L-methionyl-tRNA(fMet) + (6R)-10-formyltetrahydrofolate = N-formyl-L-methionyl-tRNA(fMet) + (6S)-5,6,7,8-tetrahydrofolate + H(+). In terms of biological role, attaches a formyl group to the free amino group of methionyl-tRNA(fMet). The formyl group appears to play a dual role in the initiator identity of N-formylmethionyl-tRNA by promoting its recognition by IF2 and preventing the misappropriation of this tRNA by the elongation apparatus. The polypeptide is Methionyl-tRNA formyltransferase (Glaesserella parasuis serovar 5 (strain SH0165) (Haemophilus parasuis)).